A 537-amino-acid chain; its full sequence is uncharacterized protein (537 aa).

The first 15 residues, 1-15 (MALFQLFSFLNVTLG), serve as a signal peptide directing secretion. Transmembrane regions (helical) follow at residues 459–479 (VLFS…GCCF) and 490–510 (VILL…LGFT).

The protein resides in the host membrane. This is an uncharacterized protein from Citrus sinensis (Sweet orange).